A 506-amino-acid chain; its full sequence is Anaerobic nitric oxide reductase transcription regulator NorR (506 aa).

A 4-aspartylphosphate modification is found at Asp-57. One can recognise a Sigma-54 factor interaction domain in the interval 187-416 (MIGLSPAMTQ…LEHAIHRAVV (230 aa)). ATP-binding positions include 215–222 (GETGTGKE) and 278–287 (ADNGTLFLDE). Residues 481–500 (WAASARALETDVANLHRLAK) constitute a DNA-binding region (H-T-H motif).

It participates in nitrogen metabolism; nitric oxide reduction. Its function is as follows. Required for the expression of anaerobic nitric oxide (NO) reductase, acts as a transcriptional activator for at least the norVW operon. Activation also requires sigma-54. This chain is Anaerobic nitric oxide reductase transcription regulator NorR, found in Salmonella dublin (strain CT_02021853).